Reading from the N-terminus, the 815-residue chain is uncharacterized protein (815 aa).

The segment at residues 31 to 57 is a DNA-binding region (zn(2)-C6 fungal-type); it reads CDMCRRKKIKCDGLRPCKNCKAGKLEC. The helical transmembrane segment at 560–580 threads the bilayer; that stretch reads YWTTVYCGFSTIVTLIFAALL. Disordered regions lie at residues 646-668 and 769-792; these read ESNV…SNTQ and DPDV…FNPT. Over residues 780–792 the composition is skewed to polar residues; the sequence is SSSLNNSTPFNPT.

The protein localises to the cytoplasm. The protein resides in the nucleus membrane. This is an uncharacterized protein from Schizosaccharomyces pombe (strain 972 / ATCC 24843) (Fission yeast).